The sequence spans 101 residues: Replication restart protein PriB (101 aa).

One can recognise an SSB domain in the interval 1–101; the sequence is MTTNNLVLAG…LHAENVELKT (101 aa).

Belongs to the PriB family. In terms of assembly, homodimer. Interacts with PriA and DnaT. Component of the replication restart primosome. Primosome assembly occurs via a 'hand-off' mechanism. PriA binds to replication forks, subsequently PriB then DnaT bind; DnaT then displaces ssDNA to generate the helicase loading substrate.

Involved in the restart of stalled replication forks, which reloads the replicative helicase on sites other than the origin of replication; the PriA-PriB pathway is the major replication restart pathway. During primosome assembly it facilitates complex formation between PriA and DnaT on DNA; stabilizes PriA on DNA. Stimulates the DNA unwinding activity of PriA helicase. The sequence is that of Replication restart protein PriB from Shewanella piezotolerans (strain WP3 / JCM 13877).